Reading from the N-terminus, the 850-residue chain is Polyhomeotic-like protein 2 (850 aa).

Disordered regions lie at residues 1–79 (MENE…QYLQ), 233–314 (QQTP…RAVP), 335–386 (LPQP…DHAL), 402–436 (THVHKPGNSQQCHLPTLDTGSQNGHPEGGSHPPQR), and 528–553 (MTSGNGNSASSIAGTAPQNGENKPPQ). Low complexity predominate over residues 15–32 (SVTTNTSGTNSSSGCISS). Residues 33 to 56 (SGGGGGSGGRPTAPQISVYSGIPD) form an interaction with BMI1 region. The segment covering 343-352 (PQPQFVAQQQ) has biased composition (low complexity). 2 stretches are compositionally biased toward polar residues: residues 368–380 (LASVSPSLALQSS) and 402–425 (THVHKPGNSQQCHLPTLDTGSQNG). Low complexity predominate over residues 529–543 (TSGNGNSASSIAGTA). Residues 550–579 (KPPQAIVKPQILTHVIEGFVIQEGAEPFPV) carry the HD1 motif. Glycyl lysine isopeptide (Lys-Gly) (interchain with G-Cter in SUMO2) cross-links involve residues Lys-590 and Lys-592. Positions 597–624 (FLPEKPPQQDHTTTTDSEMEEPYLQESK) are disordered. The residue at position 611 (Thr-611) is a Phosphothreonine. Ser-613 is subject to Phosphoserine. Residue Lys-624 forms a Glycyl lysine isopeptide (Lys-Gly) (interchain with G-Cter in SUMO2) linkage. An FCS-type zinc finger spans residues 625 to 659 (EEGTPLKLKCELCGRVDFAYKFKRSKRFCSMACAK). Positions 634, 637, 653, and 657 each coordinate Zn(2+). Disordered stretches follow at residues 676–712 (RSKLQKAGTTTHNRRRASKASLPTLTKDTKKQPSGTV) and 725–764 (SQEDSSRCSDNSSYEEPLSPISASSSTSRRRQGQRDLDLP). Lys-694 is covalently cross-linked (Glycyl lysine isopeptide (Lys-Gly) (interchain with G-Cter in SUMO2)). Residues 696–712 (SLPTLTKDTKKQPSGTV) are compositionally biased toward polar residues. Ser-743 bears the Phosphoserine mark. Residues 786 to 850 (WNVEDVYEFI…YARISMLKDS (65 aa)) enclose the SAM domain. Lys-839 participates in a covalent cross-link: Glycyl lysine isopeptide (Lys-Gly) (interchain with G-Cter in SUMO2).

In terms of assembly, component of a PRC1-like complex. Interacts with CBX4. Interacts with BMI1, PCGF2, PHC1 and RNF2. Interacts with CHTOP. Interacts with the N-terminal region of the SP1 transcription factor and with MAPKAPK2. Interacts with SAMD7. Interacts with SAMD11. As to expression, isoform 2 is ubiquitously expressed in embryos and adult tissues at much higher level than isoform 1.

Its subcellular location is the nucleus. In terms of biological role, component of a Polycomb group (PcG) multiprotein PRC1-like complex, a complex class required to maintain the transcriptionally repressive state of many genes, including Hox genes, throughout development. PcG PRC1 complex acts via chromatin remodeling and modification of histones; it mediates monoubiquitination of histone H2A 'Lys-119', rendering chromatin heritably changed in its expressibility. The protein is Polyhomeotic-like protein 2 (Phc2) of Mus musculus (Mouse).